Here is a 158-residue protein sequence, read N- to C-terminus: Tryptophan-rich protein TspO (158 aa).

Helical transmembrane passes span Ile-5–Phe-25, Leu-48–Leu-68, Val-79–Phe-99, Leu-105–Phe-125, and Leu-134–Leu-154.

Belongs to the TspO/BZRP family.

Its subcellular location is the membrane. It localises to the cell membrane. Binds tetrapyrroles and promotes the photooxidative degradation of protoporphyrin IX. Can bind the benzodiazepine receptor agonist PK-11195 (in vitro); this interferes with photooxidative tetrapyrrole degradation. May play a role in the transmembrane transport of tetrapyrroles and similar compounds. The chain is Tryptophan-rich protein TspO from Chlorobaculum tepidum (strain ATCC 49652 / DSM 12025 / NBRC 103806 / TLS) (Chlorobium tepidum).